Consider the following 919-residue polypeptide: TRPM8 channel-associated factor 2 (919 aa).

The region spanning 543 to 842 is the Peptidase M60 domain; that stretch reads DVWMSTGLYL…TYLQLQEVFG (300 aa).

Belongs to the TCAF family. Interacts with TRPM8 (via N-terminus and C-terminus domains); the interaction inhibits TRPM8 channel activity. Interacts with TRPV6.

It is found in the cell membrane. Its function is as follows. Negatively regulates the plasma membrane cation channel TRPM8 activity. Involved in the recruitment of TRPM8 to the cell surface. Promotes prostate cancer cell migration stimulation in a TRPM8-dependent manner. This is TRPM8 channel-associated factor 2 from Mus musculus (Mouse).